The sequence spans 310 residues: Terpene synthase 6 (310 aa).

Residues 93–98 (DDFYFE) carry the DDxx(x)D/E motif motif. An NDxxSxxxD/E motif motif is present at residues 222–230 (NDCYSFNKE).

This sequence belongs to the terpene synthase family.

The enzyme catalyses (2E,6E)-farnesyl diphosphate = (E)-beta-farnesene + diphosphate. The catalysed reaction is (2E,6E)-farnesyl diphosphate = (1S,2S,4R)-beta-elemene + diphosphate. It carries out the reaction (2E,6E)-farnesyl diphosphate = (3E,6E)-alpha-farnesene + diphosphate. Its function is as follows. Terpene synthase that converts its substrate farnesyl diphosphate (FPP) into the sesquiterpenes beta-elemene, (E)-beta-farnesene and (E,E)-alpha-farnesene. This Dictyostelium purpureum (Slime mold) protein is Terpene synthase 6.